The primary structure comprises 4367 residues: Guanylate cyclase (4367 aa).

Residues Met-1–Glu-10 show a composition bias toward polar residues. The segment at Met-1–Gln-70 is disordered. The Cytoplasmic segment spans residues Met-1–Arg-150. The span at Pro-19–Ala-33 shows a compositional bias: basic and acidic residues. Residues His-54 to Phe-63 are compositionally biased toward polar residues. Residues Val-151–Asn-171 traverse the membrane as a helical segment. The Extracellular segment spans residues Pro-172–His-174. Residues Ala-175–Phe-195 traverse the membrane as a helical segment. The Cytoplasmic portion of the chain corresponds to Thr-196–Asp-373. Residues Ile-374–Met-394 traverse the membrane as a helical segment. The Extracellular portion of the chain corresponds to Ser-395–Arg-452. The tract at residues Arg-402–Ser-426 is disordered. Low complexity predominate over residues Thr-407 to Ser-426. Residues Phe-453–Tyr-473 form a helical membrane-spanning segment. Topologically, residues Leu-474 to Val-2258 are cytoplasmic. 10 disordered regions span residues Ile-486–Leu-535, Ser-550–Arg-699, Glu-831–Leu-918, Arg-932–Ala-966, Val-980–Ser-1047, Gly-1079–Val-1164, Pro-1344–Ser-1593, Phe-1607–Gly-1652, Gly-1773–Ser-1861, and Asp-1881–Leu-1946. Positions Ala-523–Leu-535 are enriched in polar residues. Composition is skewed to basic and acidic residues over residues Glu-605–Leu-628 and Arg-670–Ser-679. Low complexity predominate over residues Ser-850–Ala-863. Positions Gln-880–Pro-892 are enriched in polar residues. Low complexity predominate over residues Ala-906–Ser-917. The segment covering Arg-932–Arg-948 has biased composition (basic and acidic residues). Residues Gln-983–Gln-996 are compositionally biased toward low complexity. The span at Asp-1025 to Ser-1047 shows a compositional bias: basic and acidic residues. Polar residues-rich tracts occupy residues Ser-1084–Ser-1094 and Arg-1117–Pro-1130. A compositionally biased stretch (low complexity) spans Pro-1344–Pro-1357. Gly residues-rich tracts occupy residues Gln-1370–Gly-1381 and Cys-1389–Gly-1400. Residues Val-1443–Pro-1454 are compositionally biased toward pro residues. Over residues Ser-1527 to Asp-1542 the composition is skewed to basic and acidic residues. A compositionally biased stretch (acidic residues) spans Thr-1543–Glu-1567. Positions Ser-1583–Ser-1593 are enriched in low complexity. Polar residues-rich tracts occupy residues Gly-1628–Gly-1652, Val-1779–Lys-1791, and Val-1843–Gln-1852. Basic and acidic residues predominate over residues Asp-1881–Ala-1922. Residues Arg-1933–Leu-1942 show a composition bias toward polar residues. The helical transmembrane segment at Ser-2259 to Phe-2279 threads the bilayer. At Gln-2280–Glu-2289 the chain is on the extracellular side. Residues Val-2290 to Ile-2310 form a helical membrane-spanning segment. Over His-2311 to Arg-2343 the chain is Cytoplasmic. The helical transmembrane segment at Phe-2344–Ala-2364 threads the bilayer. The Extracellular segment spans residues Thr-2365 to Gln-2376. Residues Val-2377–Val-2397 traverse the membrane as a helical segment. Residues Arg-2398 to Pro-2408 are Cytoplasmic-facing. A helical membrane pass occupies residues Thr-2409–Tyr-2429. Residues Ser-2430 to Arg-2444 are Extracellular-facing. A helical transmembrane segment spans residues Val-2445 to Leu-2465. Over Val-2466 to Val-2724 the chain is Cytoplasmic. Residues Ile-2725–Ile-2745 traverse the membrane as a helical segment. At His-2746–Thr-2762 the chain is on the extracellular side. Residues Leu-2763–Leu-2783 form a helical membrane-spanning segment. The Cytoplasmic portion of the chain corresponds to Asp-2784–His-2785. A helical membrane pass occupies residues Phe-2786–Thr-2806. At Ala-2807–Thr-2823 the chain is on the extracellular side. The helical transmembrane segment at Phe-2824 to Val-2844 threads the bilayer. Residues Thr-2845–Pro-2858 lie on the Cytoplasmic side of the membrane. The chain crosses the membrane as a helical span at residues Leu-2859–Gly-2879. Over Tyr-2880–Gln-2903 the chain is Extracellular. A helical membrane pass occupies residues Arg-2904–Leu-2924. The Cytoplasmic segment spans residues Asn-2925 to Asn-3693. In terms of domain architecture, Guanylate cyclase 1 spans Ser-2942 to Lys-3150. 6 disordered regions span residues Asp-3214–Gly-3245, Gly-3359–Asp-3402, Ser-3456–Leu-3475, Gln-3485–Thr-3508, Gly-3523–Lys-3596, and Phe-3620–Glu-3653. Over residues Arg-3383–Asp-3402 the composition is skewed to basic and acidic residues. Composition is skewed to basic and acidic residues over residues Gln-3485 to Gly-3499, Glu-3529 to Glu-3541, and Thr-3549 to Glu-3569. Over residues Ala-3626–Ala-3637 the composition is skewed to low complexity. The helical transmembrane segment at Ile-3694–Thr-3714 threads the bilayer. Residues Arg-3715–Thr-3736 lie on the Extracellular side of the membrane. A helical transmembrane segment spans residues Gly-3737–Phe-3757. The Cytoplasmic portion of the chain corresponds to His-3758–Arg-3772. The chain crosses the membrane as a helical span at residues Trp-3773–Asn-3793. Topologically, residues Ser-3794–Arg-3895 are extracellular. The chain crosses the membrane as a helical span at residues Ala-3896–His-3916. Over His-3917–Leu-3921 the chain is Cytoplasmic. The chain crosses the membrane as a helical span at residues Leu-3922 to Ile-3942. Topologically, residues Thr-3943–Ser-3950 are extracellular. The chain crosses the membrane as a helical span at residues Thr-3951–Cys-3971. The Cytoplasmic portion of the chain corresponds to Lys-3972 to Ser-4367. Positions Thr-4024 to Glu-4159 constitute a Guanylate cyclase 2 domain. Residues Asp-4029, Ile-4030, and Asp-4073 each contribute to the Mg(2+) site. The segment at Ala-4292–Ser-4367 is disordered. Over residues Asp-4333–Arg-4344 the composition is skewed to basic and acidic residues. A compositionally biased stretch (polar residues) spans Asp-4356 to Ser-4367.

The protein in the N-terminal section; belongs to the cation transport ATPase (P-type) (TC 3.A.3) family. Type IV subfamily. In the C-terminal section; belongs to the adenylyl cyclase class-4/guanylyl cyclase family. As to quaternary structure, interacts with chaperone CDC50.1; the interaction regulates guanylate cyclase GC trafficking and sensing environmental changes. Interacts with UGO; the interaction regulates guanylate cyclase GC trafficking and catalytic activity. The cofactor is Mg(2+). Requires Mn(2+) as cofactor.

It is found in the cell membrane. It catalyses the reaction GTP = 3',5'-cyclic GMP + diphosphate. Functionally, catalyzes the synthesis of the second messenger cGMP from GTP. During the tachyzoite lytic growth cycle in host cells, detects and transduces environmental changes in potassium, phosphatidic acid and pH levels. By producing cGMP in response to these environmental changes, activates PKG and thereby regulates PKG-dependent microneme secretion which is essential for tachyzoite motility, host cell attachment invasion of and egress from host cells. May play a role in the fission of connected tachyzoites at their basal pole during egress. Does not display flippase activity towards phosphatidylserine, phosphatidic acid or phosphatidylcholine. This Toxoplasma gondii (strain ATCC 50853 / GT1) protein is Guanylate cyclase.